The primary structure comprises 252 residues: Probable phosphatase SO_1652 (252 aa).

H8, H10, H16, H41, E74, H102, H132, D193, and H195 together coordinate Zn(2+).

This sequence belongs to the PHP family. Zn(2+) serves as cofactor.

This is Probable phosphatase SO_1652 from Shewanella oneidensis (strain ATCC 700550 / JCM 31522 / CIP 106686 / LMG 19005 / NCIMB 14063 / MR-1).